Consider the following 743-residue polypeptide: 1,4-alpha-glucan branching enzyme GlgB (743 aa).

D416 functions as the Nucleophile in the catalytic mechanism. E469 (proton donor) is an active-site residue.

Belongs to the glycosyl hydrolase 13 family. GlgB subfamily. Monomer.

The enzyme catalyses Transfers a segment of a (1-&gt;4)-alpha-D-glucan chain to a primary hydroxy group in a similar glucan chain.. It functions in the pathway glycan biosynthesis; glycogen biosynthesis. Its function is as follows. Catalyzes the formation of the alpha-1,6-glucosidic linkages in glycogen by scission of a 1,4-alpha-linked oligosaccharide from growing alpha-1,4-glucan chains and the subsequent attachment of the oligosaccharide to the alpha-1,6 position. In Shewanella baltica (strain OS185), this protein is 1,4-alpha-glucan branching enzyme GlgB.